The chain runs to 126 residues: MAVPSEFKYSKEHEWVKIENNVATIGITEYAQNELGDIVFVELPETDDELNEGDTFGSVESVKTVSELYAPISGKIVEVNEELEDSPEFVNESPYEKAWMVKIEISDDSQLEELLSADQYSEMIGE.

The 83-residue stretch at 22–104 (VATIGITEYA…YEKAWMVKIE (83 aa)) folds into the Lipoyl-binding domain. At lysine 63 the chain carries N6-lipoyllysine.

Belongs to the GcvH family. As to quaternary structure, the glycine cleavage system is composed of four proteins: P, T, L and H. Requires (R)-lipoate as cofactor.

Functionally, the glycine cleavage system catalyzes the degradation of glycine. The H protein shuttles the methylamine group of glycine from the P protein to the T protein. Is also involved in protein lipoylation via its role as an octanoyl/lipoyl carrier protein intermediate. This chain is Glycine cleavage system H protein, found in Staphylococcus epidermidis (strain ATCC 35984 / DSM 28319 / BCRC 17069 / CCUG 31568 / BM 3577 / RP62A).